Here is a 204-residue protein sequence, read N- to C-terminus: Putative t-SNARE coiled-coil homology domain-containing protein L657 (204 aa).

2 consecutive t-SNARE coiled-coil homology domains span residues 9–71 (SDYY…MDHV) and 140–202 (DNSR…IKHT). Residues 159–181 (VLEKQANDISNILDEQNNTLEII) adopt a coiled-coil conformation.

This is Putative t-SNARE coiled-coil homology domain-containing protein L657 from Acanthamoeba polyphaga (Amoeba).